The sequence spans 570 residues: Nucleoprotein (570 aa).

Residues 54 to 241 form a binding site for the cap structure m7GTP region; the sequence is MRKEKRDDSD…IEPKKSAINI (188 aa). The Mn(2+) site is built by Asp-390 and Glu-392. Residues Glu-400, Cys-507, His-510, and Cys-530 each contribute to the Zn(2+) site. Asp-534 is a binding site for Mn(2+).

This sequence belongs to the arenaviridae nucleocapsid protein family. Homomultimerizes to form the nucleocapsid. Binds to viral genomic RNA. Interacts with glycoprotein G2. Interacts with protein Z; this interaction probably directs the encapsidated genome to budding sites. Interacts with protein L; this interaction does not interfere with Z-L interaction. Interacts with host IKBKE (via Protein kinase domain); the interaction inhibits IKBKE kinase activity.

Its subcellular location is the virion. It is found in the host cytoplasm. Functionally, encapsidates the genome, protecting it from nucleases. The encapsidated genomic RNA is termed the nucleocapsid (NC). Serves as template for viral transcription and replication. The increased presence of protein N in host cell does not seem to trigger the switch from transcription to replication as observed in other negative strain RNA viruses. Through the interaction with host IKBKE, strongly inhibits the phosphorylation and nuclear translocation of host IRF3, a protein involved in interferon activation pathway, leading to the inhibition of interferon-beta and IRF3-dependent promoters activation. Also encodes a functional 3'-5' exoribonuclease that degrades preferentially dsRNA substrates and thereby participates in the suppression of interferon induction. The protein is Nucleoprotein of Mopeia virus (MOPV).